The following is a 129-amino-acid chain: Acyl carrier protein 2, chloroplastic (129 aa).

The transit peptide at 1-49 (MASAAASAVSFARPVKAICVNSVSFSALRKDNVSFRLQPVPQRFSVCCA) directs the protein to the chloroplast. Positions 52 to 127 (KETVEKVCDI…DAANLIDSLV (76 aa)) constitute a Carrier domain. An O-(pantetheine 4'-phosphoryl)serine modification is found at Ser-87.

This sequence belongs to the acyl carrier protein (ACP) family. 4'-phosphopantetheine is transferred from CoA to a specific serine of apo-ACP by acpS. This modification is essential for activity because fatty acids are bound in thioester linkage to the sulfhydryl of the prosthetic group.

Its subcellular location is the plastid. The protein localises to the chloroplast. The protein operates within lipid metabolism; fatty acid biosynthesis. Carrier of the growing fatty acid chain in fatty acid biosynthesis. The chain is Acyl carrier protein 2, chloroplastic (ACL1.2) from Hordeum vulgare (Barley).